A 396-amino-acid polypeptide reads, in one-letter code: Beta-1,4-galactosyltransferase 3 (396 aa).

Topologically, residues 1–10 (MLRRLLERPC) are cytoplasmic. A helical; Signal-anchor for type II membrane protein transmembrane segment spans residues 11-31 (TLALLVGSQLAVMMYLSLGGF). At 32–396 (RSLSALFGRE…ANHTAPHGSH (365 aa)) the chain is on the lumenal side. The N-linked (GlcNAc...) asparagine glycan is linked to Asn57. An intrachain disulfide couples Cys80 to Cys122. 133-137 (PHRAR) is a UDP-alpha-D-galactose binding site. Asn169 carries an N-linked (GlcNAc...) asparagine glycan. UDP-alpha-D-galactose contacts are provided by residues 172-174 (FNR), 199-200 (VD), Tyr229, and Trp261. A disulfide bridge connects residues Cys193 and Cys212. Asp200 is a binding site for Mn(2+). 263-266 (GEDD) provides a ligand contact to N-acetyl-D-glucosamine. His294 is a Mn(2+) binding site. 294–296 (HRG) lines the UDP-alpha-D-galactose pocket. Arg306 contributes to the N-acetyl-D-glucosamine binding site. Asn340 carries N-linked (GlcNAc...) asparagine glycosylation. The segment at 341-396 (ITADIGTDPRGPRTSSGPHYPPGSSQAFRQEMLQRRPPARPGPLPTANHTAPHGSH) is disordered. Residues 353 to 368 (RTSSGPHYPPGSSQAF) are compositionally biased toward polar residues. N-linked (GlcNAc...) asparagine glycosylation is present at Asn388.

It belongs to the glycosyltransferase 7 family. Mn(2+) serves as cofactor.

Its subcellular location is the golgi apparatus. The protein resides in the golgi stack membrane. It carries out the reaction an N-acetyl-beta-D-glucosaminyl derivative + UDP-alpha-D-galactose = a beta-D-galactosyl-(1-&gt;4)-N-acetyl-beta-D-glucosaminyl derivative + UDP + H(+). It catalyses the reaction N-acetyl-D-glucosamine + UDP-alpha-D-galactose = beta-D-galactosyl-(1-&gt;4)-N-acetyl-D-glucosamine + UDP + H(+). The catalysed reaction is a beta-D-GlcNAc-(1-&gt;3)-beta-D-Gal-(1-&gt;4)-beta-D-Glc-(1&lt;-&gt;1)-Cer(d18:1(4E)) + UDP-alpha-D-galactose = a neolactoside nLc4Cer(d18:1(4E)) + UDP + H(+). The enzyme catalyses a beta-D-glucosylceramide + UDP-alpha-D-galactose = a beta-D-galactosyl-(1-&gt;4)-beta-D-glucosyl-(1&lt;-&gt;1)-ceramide + UDP + H(+). It carries out the reaction a neolactoside IV(3)-beta-GlcNAc-nLc4Cer + UDP-alpha-D-galactose = a neolactoside nLc6Cer + UDP + H(+). It functions in the pathway protein modification; protein glycosylation. Its function is as follows. Responsible for the synthesis of complex-type N-linked oligosaccharides in many glycoproteins as well as the carbohydrate moieties of glycolipids. This is Beta-1,4-galactosyltransferase 3 (B4GALT3) from Bos taurus (Bovine).